The following is a 183-amino-acid chain: uncharacterized protein (183 aa).

4 helical membrane-spanning segments follow: residues lysine 13–serine 35, leucine 60–phenylalanine 82, phenylalanine 117–phenylalanine 139, and leucine 149–serine 171.

It is found in the cell membrane. This is an uncharacterized protein from Archaeoglobus fulgidus (strain ATCC 49558 / DSM 4304 / JCM 9628 / NBRC 100126 / VC-16).